A 634-amino-acid chain; its full sequence is Chaperone protein dnaK2 (634 aa).

Phosphothreonine; by autocatalysis is present on Thr-197. Positions 592–634 are disordered; that stretch reads IGSSVYQQPGNQPPAPGTPDSNESNDKGGDDDVIDADFTETKD. Positions 622–634 are enriched in acidic residues; it reads DDVIDADFTETKD.

The protein belongs to the heat shock protein 70 family.

In terms of biological role, acts as a chaperone. The polypeptide is Chaperone protein dnaK2 (dnaK2) (Prochlorococcus marinus subsp. pastoris (strain CCMP1986 / NIES-2087 / MED4)).